The primary structure comprises 184 residues: ATP synthase subunit b, chloroplastic (184 aa).

Residues 29-49 form a helical membrane-spanning segment; it reads INLINLILVLGILFYYGKGVL.

This sequence belongs to the ATPase B chain family. F-type ATPases have 2 components, F(1) - the catalytic core - and F(0) - the membrane proton channel. F(1) has five subunits: alpha(3), beta(3), gamma(1), delta(1), epsilon(1). F(0) has four main subunits: a(1), b(1), b'(1) and c(10-14). The alpha and beta chains form an alternating ring which encloses part of the gamma chain. F(1) is attached to F(0) by a central stalk formed by the gamma and epsilon chains, while a peripheral stalk is formed by the delta, b and b' chains.

It is found in the plastid. The protein localises to the chloroplast thylakoid membrane. F(1)F(0) ATP synthase produces ATP from ADP in the presence of a proton or sodium gradient. F-type ATPases consist of two structural domains, F(1) containing the extramembraneous catalytic core and F(0) containing the membrane proton channel, linked together by a central stalk and a peripheral stalk. During catalysis, ATP synthesis in the catalytic domain of F(1) is coupled via a rotary mechanism of the central stalk subunits to proton translocation. Functionally, component of the F(0) channel, it forms part of the peripheral stalk, linking F(1) to F(0). This chain is ATP synthase subunit b, chloroplastic, found in Adiantum capillus-veneris (Maidenhair fern).